A 182-amino-acid polypeptide reads, in one-letter code: MKKLLKKLVVLFLSSLVIIFNVWYFIICAFSPEYYQNTNLTSNEIIRFEKLYHIDFPDETKFIKAREYLAGPGGDTSAVLYVSLPTKRVEKVLSDYTYMKINYTDNVGSMYGVDVSKSVAGLTTLTFGTYDKKGTFYNMKHDDDWMYKGTDWNLYFWTAASYNAVIFVFVLVIVKQMNKILN.

A signal peptide spans 1–29 (MKKLLKKLVVLFLSSLVIIFNVWYFIICA). Residues 152-174 (WNLYFWTAASYNAVIFVFVLVIV) traverse the membrane as a helical segment.

The protein localises to the membrane. This is an uncharacterized protein from Bacillus subtilis (strain 168).